Consider the following 166-residue polypeptide: 2-C-methyl-D-erythritol 2,4-cyclodiphosphate synthase (166 aa).

D17 and H19 together coordinate a divalent metal cation. 4-CDP-2-C-methyl-D-erythritol 2-phosphate contacts are provided by residues D17–H19 and H43–S44. Residue H51 coordinates a divalent metal cation. 4-CDP-2-C-methyl-D-erythritol 2-phosphate-binding positions include D65–G67, A109–A115, and R151.

This sequence belongs to the IspF family. In terms of assembly, homotrimer. A divalent metal cation serves as cofactor.

It carries out the reaction 4-CDP-2-C-methyl-D-erythritol 2-phosphate = 2-C-methyl-D-erythritol 2,4-cyclic diphosphate + CMP. It functions in the pathway isoprenoid biosynthesis; isopentenyl diphosphate biosynthesis via DXP pathway; isopentenyl diphosphate from 1-deoxy-D-xylulose 5-phosphate: step 4/6. In terms of biological role, involved in the biosynthesis of isopentenyl diphosphate (IPP) and dimethylallyl diphosphate (DMAPP), two major building blocks of isoprenoid compounds. Catalyzes the conversion of 4-diphosphocytidyl-2-C-methyl-D-erythritol 2-phosphate (CDP-ME2P) to 2-C-methyl-D-erythritol 2,4-cyclodiphosphate (ME-CPP) with a corresponding release of cytidine 5-monophosphate (CMP). In Rhodopirellula baltica (strain DSM 10527 / NCIMB 13988 / SH1), this protein is 2-C-methyl-D-erythritol 2,4-cyclodiphosphate synthase.